The primary structure comprises 162 residues: Disulfide bond formation protein B (162 aa).

Residues 1–8 (MTPLFRKA) lie on the Cytoplasmic side of the membrane. The helical transmembrane segment at 9–25 (VWLLFAVSVCAFAGSLA) threads the bilayer. The Periplasmic portion of the chain corresponds to 26-43 (AQYVLGMEPCVLCISQRL). A disulfide bond links Cys35 and Cys38. The helical transmembrane segment at 44 to 60 (CVLATALCAAIVLMCRP) threads the bilayer. The Cytoplasmic portion of the chain corresponds to 61 to 67 (RRKAGGL). The helical transmembrane segment at 68–85 (FGAVFISIPAVTGISVAA) threads the bilayer. Residues 86 to 141 (YQLWLQSLPPGTAPSCGAPWTFRLKGWPLFDWFEPVVRGFGNCAEPDYLLGVALPV) lie on the Periplasmic side of the membrane. Cysteines 101 and 128 form a disulfide. Residues 142–160 (WSVAYFLAVALTVWWAWAR) form a helical membrane-spanning segment. At 161–162 (AK) the chain is on the cytoplasmic side.

This sequence belongs to the DsbB family.

The protein resides in the cell inner membrane. In terms of biological role, required for disulfide bond formation in some periplasmic proteins. Acts by oxidizing the DsbA protein. In Neisseria meningitidis serogroup A / serotype 4A (strain DSM 15465 / Z2491), this protein is Disulfide bond formation protein B.